We begin with the raw amino-acid sequence, 567 residues long: tRNA(His) guanylyltransferase 1 (567 aa).

Asp342, Gly343, and Asp389 together coordinate Mg(2+). Residues 342–347 and 388–389 each bind GTP; these read DGCHFH and SD. Glycyl lysine isopeptide (Lys-Gly) (interchain with G-Cter in ubiquitin) cross-links involve residues Lys397 and Lys403.

The protein belongs to the tRNA(His) guanylyltransferase family. Requires Mg(2+) as cofactor.

The protein localises to the nucleus. Its subcellular location is the nucleoplasm. The enzyme catalyses a 5'-end ribonucleotide-tRNA(His) + GTP + ATP + H2O = a 5'-end phospho-guanosine-ribonucleotide-tRNA(His) + AMP + 2 diphosphate + H(+). Functionally, adds a GMP to the 5'-end of tRNA(His) after transcription and RNase P cleavage. The protein is tRNA(His) guanylyltransferase 1 (THG1) of Arabidopsis thaliana (Mouse-ear cress).